We begin with the raw amino-acid sequence, 301 residues long: Diaminopimelate epimerase (301 aa).

Residues N15, Q47, and N67 each contribute to the substrate site. C76 serves as the catalytic Proton donor. Residues 77-78 (GN), N163, N197, and 215-216 (ER) each bind substrate. C224 (proton acceptor) is an active-site residue. 225–226 (GS) lines the substrate pocket.

This sequence belongs to the diaminopimelate epimerase family. In terms of assembly, homodimer.

Its subcellular location is the cytoplasm. The enzyme catalyses (2S,6S)-2,6-diaminopimelate = meso-2,6-diaminopimelate. Its pathway is amino-acid biosynthesis; L-lysine biosynthesis via DAP pathway; DL-2,6-diaminopimelate from LL-2,6-diaminopimelate: step 1/1. Its function is as follows. Catalyzes the stereoinversion of LL-2,6-diaminopimelate (L,L-DAP) to meso-diaminopimelate (meso-DAP), a precursor of L-lysine and an essential component of the bacterial peptidoglycan. The sequence is that of Diaminopimelate epimerase from Rhizobium etli (strain ATCC 51251 / DSM 11541 / JCM 21823 / NBRC 15573 / CFN 42).